Consider the following 545-residue polypeptide: Threonine--tRNA ligase catalytic subunit (545 aa).

The tract at residues 139 to 433 is catalytic; the sequence is DHRLIGEKLD…LLEHFKGKLP (295 aa). Positions 231, 282, and 410 each coordinate Zn(2+).

It belongs to the class-II aminoacyl-tRNA synthetase family. In terms of assembly, homodimer. Probably interacts with its editing subunit. It depends on Zn(2+) as a cofactor.

Its subcellular location is the cytoplasm. The enzyme catalyses tRNA(Thr) + L-threonine + ATP = L-threonyl-tRNA(Thr) + AMP + diphosphate + H(+). Functionally, catalyzes the attachment of threonine to tRNA(Thr) in a two-step reaction: L-threonine is first activated by ATP to form Thr-AMP and then transferred to the acceptor end of tRNA(Thr). Also activates L-serine and transfers it to tRNA(Thr) but cannot deacylate incorrectly charged amino acid; unlike most archaea the editing function is found in a freestanding protein. In Saccharolobus islandicus (strain L.S.2.15 / Lassen #1) (Sulfolobus islandicus), this protein is Threonine--tRNA ligase catalytic subunit.